Reading from the N-terminus, the 305-residue chain is Plant-type L-asparaginase (305 aa).

Thr-175 acts as the Nucleophile in catalysis. Substrate is bound by residues 202 to 205 (RVGD) and 224 to 227 (TGLG).

Belongs to the Ntn-hydrolase family. Heterotetramer of two alpha and two beta chains arranged as a dimer of alpha/beta heterodimers. Post-translationally, autocleaved. Generates the alpha and beta subunits. The N-terminal residue of the beta subunit is thought to be responsible for the nucleophile hydrolase activity.

The enzyme catalyses L-asparagine + H2O = L-aspartate + NH4(+). In terms of biological role, catalyzes the hydrolysis of L-asparagine into L-aspartate and ammonia. The polypeptide is Plant-type L-asparaginase (Pyrococcus horikoshii (strain ATCC 700860 / DSM 12428 / JCM 9974 / NBRC 100139 / OT-3)).